The following is a 553-amino-acid chain: Formate--tetrahydrofolate ligase (553 aa).

Residue 63-70 (TPAGEGKT) coordinates ATP.

Belongs to the formate--tetrahydrofolate ligase family.

The catalysed reaction is (6S)-5,6,7,8-tetrahydrofolate + formate + ATP = (6R)-10-formyltetrahydrofolate + ADP + phosphate. It functions in the pathway one-carbon metabolism; tetrahydrofolate interconversion. The polypeptide is Formate--tetrahydrofolate ligase (Oenococcus oeni (strain ATCC BAA-331 / PSU-1)).